The sequence spans 398 residues: Cytochrome b (398 aa).

Residues 45-65 traverse the membrane as a helical segment; sequence LGSIAGIALVIQIITGVILAM. 2 residues coordinate heme b: H95 and H109. The next 9 helical transmembrane spans lie at 96–116, 129–149, 164–184, 192–212, 245–265, 277–297, 304–324, 339–359, and 366–386; these read AVGA…GLYY, IGII…VLPW, FSAI…GFSV, FFAL…LHLV, FVGF…APNY, PLVT…YAIL, LGGV…PWLD, IAFW…SKPV, and ISRF…PLIG. Residues H196 and H210 each coordinate heme b.

This sequence belongs to the cytochrome b family. The main subunits of complex b-c1 are: cytochrome b, cytochrome c1 and the Rieske protein. Requires heme b as cofactor.

The protein localises to the cell membrane. Functionally, component of the ubiquinol-cytochrome c reductase complex (complex III or cytochrome b-c1 complex), which is a respiratory chain that generates an electrochemical potential coupled to ATP synthesis. This chain is Cytochrome b (petB), found in Rickettsia prowazekii (strain Madrid E).